A 633-amino-acid chain; its full sequence is tRNA uridine 5-carboxymethylaminomethyl modification enzyme MnmG (633 aa).

13–18 provides a ligand contact to FAD; sequence GGGHAG. An NAD(+)-binding site is contributed by 273-287; that stretch reads GPRYCPSIEDKINRF.

The protein belongs to the MnmG family. Homodimer. Heterotetramer of two MnmE and two MnmG subunits. It depends on FAD as a cofactor.

The protein resides in the cytoplasm. Its function is as follows. NAD-binding protein involved in the addition of a carboxymethylaminomethyl (cmnm) group at the wobble position (U34) of certain tRNAs, forming tRNA-cmnm(5)s(2)U34. The sequence is that of tRNA uridine 5-carboxymethylaminomethyl modification enzyme MnmG from Pseudoalteromonas atlantica (strain T6c / ATCC BAA-1087).